Here is a 378-residue protein sequence, read N- to C-terminus: Ribosomal RNA large subunit methyltransferase G (378 aa).

Belongs to the methyltransferase superfamily. RlmG family.

The protein resides in the cytoplasm. The catalysed reaction is guanosine(1835) in 23S rRNA + S-adenosyl-L-methionine = N(2)-methylguanosine(1835) in 23S rRNA + S-adenosyl-L-homocysteine + H(+). In terms of biological role, specifically methylates the guanine in position 1835 (m2G1835) of 23S rRNA. This is Ribosomal RNA large subunit methyltransferase G from Escherichia coli (strain ATCC 8739 / DSM 1576 / NBRC 3972 / NCIMB 8545 / WDCM 00012 / Crooks).